The sequence spans 136 residues: MDLPPFDMWRDYFNLSQVVMDIIQSRKQRQEGEVAEEPNSRPQEKSEQDLEGYPGCLPTICNFCKHNGESRHVYTSHQLKTPEGVVVCPILRHYVCPLCGATGDQAHTLKYCPLNSSQQSLYRRSGRNSAGRRVKR.

A disordered region spans residues 27 to 51 (KQRQEGEVAEEPNSRPQEKSEQDLE). Positions 28 to 48 (QRQEGEVAEEPNSRPQEKSEQ) are enriched in basic and acidic residues. The Nanos-type zinc finger occupies 60–114 (ICNFCKHNGESRHVYTSHQLKTPEGVVVCPILRHYVCPLCGATGDQAHTLKYCPL). C61, C64, H77, C88, C96, C99, H107, and C112 together coordinate Zn(2+). 2 short sequence motifs (C2HC) span residues 61-88 (CNFC…VVVC) and 96-112 (CPLC…LKYC).

This sequence belongs to the nanos family. In terms of assembly, interacts with CNOT1, CNOT3, CNOT6L, CNOT7 and CNOT9. As to expression, predominantly expressed in male germ cells. Expressed in self-renewing spermatogonial stem cells and developing gonads.

It localises to the cytoplasm. The protein localises to the P-body. Its subcellular location is the perinuclear region. In terms of biological role, plays a key role in the sexual differentiation of germ cells by promoting the male fate but suppressing the female fate. Represses the female fate pathways by suppressing meiosis, which in turn results in the promotion of the male fate. Maintains the suppression of meiosis by preventing STRA8 expression, which is required for premeiotic DNA replication, after CYP26B1 is decreased. Regulates the localization of the CCR4-NOT deadenylation complex to P-bodies and plays a role in recruiting the complex to trigger the degradation of mRNAs involved in meiosis. Required for the maintenance of the spermatogonial stem cell population. Not essential for the assembly of P-bodies but is required for the maintenance of their normal state. The sequence is that of Nanos homolog 2 (Nanos2) from Mus musculus (Mouse).